A 178-amino-acid polypeptide reads, in one-letter code: ATP synthase subunit delta (178 aa).

This sequence belongs to the ATPase delta chain family. As to quaternary structure, F-type ATPases have 2 components, F(1) - the catalytic core - and F(0) - the membrane proton channel. F(1) has five subunits: alpha(3), beta(3), gamma(1), delta(1), epsilon(1). F(0) has three main subunits: a(1), b(2) and c(10-14). The alpha and beta chains form an alternating ring which encloses part of the gamma chain. F(1) is attached to F(0) by a central stalk formed by the gamma and epsilon chains, while a peripheral stalk is formed by the delta and b chains.

The protein localises to the cell inner membrane. Its function is as follows. F(1)F(0) ATP synthase produces ATP from ADP in the presence of a proton or sodium gradient. F-type ATPases consist of two structural domains, F(1) containing the extramembraneous catalytic core and F(0) containing the membrane proton channel, linked together by a central stalk and a peripheral stalk. During catalysis, ATP synthesis in the catalytic domain of F(1) is coupled via a rotary mechanism of the central stalk subunits to proton translocation. In terms of biological role, this protein is part of the stalk that links CF(0) to CF(1). It either transmits conformational changes from CF(0) to CF(1) or is implicated in proton conduction. The chain is ATP synthase subunit delta from Teredinibacter turnerae (strain ATCC 39867 / T7901).